Reading from the N-terminus, the 319-residue chain is Dehydrogenase/reductase SDR family member 9 (319 aa).

The first 17 residues, 1-17, serve as a signal peptide directing secretion; the sequence is MLFWLLVLLILCGFLWN. NAD(+) contacts are provided by residues 34 to 58 and D83; that span reads ITGCDTGFGNLAARTFDKKGFHVIA. Residue S164 participates in substrate binding. Catalysis depends on Y176, which acts as the Proton acceptor. K180 contributes to the NAD(+) binding site.

This sequence belongs to the short-chain dehydrogenases/reductases (SDR) family. As to quaternary structure, homotetramer.

It is found in the microsome membrane. The protein localises to the endoplasmic reticulum membrane. The enzyme catalyses 3beta-hydroxy-5alpha-pregnane-20-one + NAD(+) = 5alpha-pregnane-3,20-dione + NADH + H(+). It catalyses the reaction 17beta-hydroxy-5alpha-androstan-3-one + NAD(+) = 5alpha-androstan-3,17-dione + NADH + H(+). It carries out the reaction androsterone + NAD(+) = 5alpha-androstan-3,17-dione + NADH + H(+). The catalysed reaction is 5alpha-androstane-3alpha,17beta-diol + NAD(+) = 17beta-hydroxy-5alpha-androstan-3-one + NADH + H(+). The enzyme catalyses all-trans-retinol + NAD(+) = all-trans-retinal + NADH + H(+). It catalyses the reaction 3alpha-hydroxy-5alpha-pregnan-20-one + NAD(+) = 5alpha-pregnane-3,20-dione + NADH + H(+). Its function is as follows. 3-alpha-hydroxysteroid dehydrogenase that converts 3-alpha-tetrahydroprogesterone (allopregnanolone) to dihydroxyprogesterone and 3-alpha-androstanediol to dihydroxyprogesterone. Also plays a role in the biosynthesis of retinoic acid from retinaldehyde. Can utilize both NADH and NADPH. The protein is Dehydrogenase/reductase SDR family member 9 (DHRS9) of Bos taurus (Bovine).